The chain runs to 69 residues: DNA gyrase inhibitor YacG (69 aa).

The Zn(2+) site is built by C14, C17, C33, and C37. The interval 46-69 (ADEEKSIPGAPDMSDSDGWSEDQY) is disordered. A compositionally biased stretch (acidic residues) spans 59-69 (SDSDGWSEDQY).

Belongs to the DNA gyrase inhibitor YacG family. As to quaternary structure, interacts with GyrB. The cofactor is Zn(2+).

Functionally, inhibits all the catalytic activities of DNA gyrase by preventing its interaction with DNA. Acts by binding directly to the C-terminal domain of GyrB, which probably disrupts DNA binding by the gyrase. The sequence is that of DNA gyrase inhibitor YacG from Aliivibrio fischeri (strain ATCC 700601 / ES114) (Vibrio fischeri).